Here is a 1020-residue protein sequence, read N- to C-terminus: Mediator of RNA polymerase II transcription subunit 16 (1020 aa).

The protein belongs to the Mediator complex subunit 16 family. Component of the Mediator complex.

Its subcellular location is the nucleus. Its function is as follows. Component of the Mediator complex, a coactivator involved in the regulated transcription of nearly all RNA polymerase II-dependent genes. Mediator functions as a bridge to convey information from gene-specific regulatory proteins to the basal RNA polymerase II transcription machinery. Mediator is recruited to promoters by direct interactions with regulatory proteins and serves as a scaffold for the assembly of a functional preinitiation complex with RNA polymerase II and the general transcription factors. In Scheffersomyces stipitis (strain ATCC 58785 / CBS 6054 / NBRC 10063 / NRRL Y-11545) (Yeast), this protein is Mediator of RNA polymerase II transcription subunit 16 (SIN4).